A 521-amino-acid chain; its full sequence is Ribonuclease Y (521 aa).

The helical transmembrane segment at 3-23 (VSIWMLVITVLAAVAAYFAGS) threads the bilayer. The KH domain occupies 211–271 (TVSVVPLPSD…VRREVARMSL (61 aa)). The 94-residue stretch at 337-430 (IYQHSLEVAF…VQAADALSGA (94 aa)) folds into the HD domain.

The protein belongs to the RNase Y family.

It localises to the cell membrane. Endoribonuclease that initiates mRNA decay. This Pelobacter propionicus (strain DSM 2379 / NBRC 103807 / OttBd1) protein is Ribonuclease Y.